The primary structure comprises 263 residues: 4-hydroxy-2-oxo-heptane-1,7-dioate aldolase (263 aa).

The active-site Proton acceptor is His45. Gln147 is a substrate binding site. Glu149 is an a divalent metal cation binding site. Substrate contacts are provided by Ala174 and Asp175. Asp175 provides a ligand contact to a divalent metal cation.

Belongs to the HpcH/HpaI aldolase family. In terms of assembly, homohexamer; trimer of dimers. A divalent metal cation is required as a cofactor.

It catalyses the reaction 4-hydroxy-2-oxoheptanedioate = succinate semialdehyde + pyruvate. The protein operates within aromatic compound metabolism; 4-hydroxyphenylacetate degradation; pyruvate and succinate semialdehyde from 4-hydroxyphenylacetate: step 7/7. Its function is as follows. Catalyzes the reversible retro-aldol cleavage of 4-hydroxy-2-ketoheptane-1,7-dioate (HKHD) to pyruvate and succinic semialdehyde. The polypeptide is 4-hydroxy-2-oxo-heptane-1,7-dioate aldolase (Salmonella enteritidis PT4 (strain P125109)).